Here is a 208-residue protein sequence, read N- to C-terminus: Histone H1t (208 aa).

Positions Met-1 to Val-16 are enriched in low complexity. Residues Met-1–Pro-40 are disordered. Ser-9 is modified (phosphoserine). The H15 domain maps to Pro-40 to Lys-113. Arg-58 is modified (citrulline). The segment at Gly-102–Lys-208 is disordered. Residues Leu-111–Val-136 are compositionally biased toward basic residues. Ser-143 bears the Phosphoserine mark. A compositionally biased stretch (basic residues) spans Lys-148–Arg-157. Position 159 is a phosphothreonine (Thr-159). Over residues Lys-163–Lys-175 the composition is skewed to basic residues. Residues Ser-167 and Ser-182 each carry the phosphoserine modification. Residues Arg-187–Lys-208 are compositionally biased toward basic residues.

The protein belongs to the histone H1/H5 family. Phosphorylated in early spermatids. Post-translationally, citrullination at Arg-58 (H1R54ci) by PADI4 takes place within the DNA-binding site of H1 and results in its displacement from chromatin and global chromatin decondensation, thereby promoting pluripotency and stem cell maintenance.

In terms of biological role, testis-specific histone H1 that forms less compacted chromatin compared to other H1 histone subtypes. Formation of more relaxed chromatin may be required to promote chromatin architecture required for proper chromosome regulation during meiosis, such as homologous recombination. Histones H1 act as linkers that bind to nucleosomes and compact polynucleosomes into a higher-order chromatin configuration. This chain is Histone H1t, found in Macaca mulatta (Rhesus macaque).